A 504-amino-acid chain; its full sequence is Pre-mRNA-processing factor 19 (504 aa).

The residue at position 2 (Ser-2) is an N-acetylserine. Residues 2–73 enclose the U-box domain; that stretch reads SLICSISNEV…KPPSATSIPA (72 aa). The segment at 68–223 is may mediate interaction with PSMC5; that stretch reads ATSIPAILKA…VGLHSASIPG (156 aa). Residues Lys-122, Lys-179, Lys-244, and Lys-261 each carry the N6-acetyllysine modification. The stretch at 219–259 is one WD 1 repeat; it reads ASIPGILALDLCPSDTNKILTGGADKNVVVFDKSTEQILAT. WD repeat units lie at residues 262-301, 304-345, 348-387, 390-429, 433-472, and 473-503; these read GHTKKVTSVVFHPSQELVFSASPDATIRIWSVPNTSCVQV, AHES…TKVT, TSGCSLTCAQFHPDGLIFGTGTMDSQIKIWDLKERTNVAN, GHSGPITSIAFSENGYYLATAADDSSVKLWDLRKLKNFKT, DNNFEVKSLIFDQSGTYLALGGTDVQIYICKQWTEILHFT, and EHSGLTTGVAFGHHAKFIASTGMDRSLKFYS.

This sequence belongs to the WD repeat PRP19 family. As to quaternary structure, homotetramer. Component of activated, catalytic and post-catalytic spliceosomes. Component of the Prp19 complex/PRP19C/Nineteen complex/NTC and related complexes described as PRP19-CDC5L splicing complex and PSO4 complex. A homotetramer of PRPF19, CDC5L, PLRG1 and BCAS2 constitute the core of those complexes. The interaction with CDC5L, PLRG1 and BCAS2 is direct within this core complex. At least three less stably associated proteins CTNNBL1, CWC15 and HSPA8 are found in the Prp19 complex. The Prp19 complex associates with the spliceosome during its assembly and remodeling recruiting additional proteins. Component of the XAB2 complex, a multimeric protein complex composed of XAB2, PRPF19, AQR, ZNF830, ISY1, and PPIE. Interacts with CWC22 and EIF4A3 in an RNA-independent manner. Interacts with RPA1 and RPA2; the PRP19-CDC5L complex is recruited to the sites of DNA repair where it interacts with the replication protein A complex (RPA). Interacts with SETMAR; required for SETMAR recruitment to site of DNA damage. Interacts with U2AF2; the interaction is direct and recruits the Prp19 complex to RNA polymerase II C-terminal domain (CTD) and the pre-mRNA. Interacts with PRPF3. Interacts with APEX1, DNTT and PSMB4. Interacts with KNSTRN. Interacts with PSMC5. Isoform 2 (via N-terminus) interacts with PPIA. Isoform 2 does not interact with CDC5L. Interacts with KHDC4. Interacts with USB1. Interacts with DDX41. Expressed in white and brown adipose tissues, brain and to a lower extent in liver, kidney, muscle, lung and spleen (at protein level).

Its subcellular location is the nucleus. It is found in the nucleoplasm. It localises to the cytoplasm. The protein resides in the cytoskeleton. The protein localises to the spindle. Its subcellular location is the lipid droplet. The enzyme catalyses S-ubiquitinyl-[E2 ubiquitin-conjugating enzyme]-L-cysteine + [acceptor protein]-L-lysine = [E2 ubiquitin-conjugating enzyme]-L-cysteine + N(6)-ubiquitinyl-[acceptor protein]-L-lysine.. Its pathway is protein modification; protein ubiquitination. Its function is as follows. Ubiquitin-protein ligase which is a core component of several complexes mainly involved in pre-mRNA splicing and DNA repair. Required for pre-mRNA splicing as component of the spliceosome. Core component of the PRP19C/Prp19 complex/NTC/Nineteen complex which is part of the spliceosome and participates in its assembly, its remodeling and is required for its activity. During assembly of the spliceosome, mediates 'Lys-63'-linked polyubiquitination of the U4 spliceosomal protein PRPF3. Ubiquitination of PRPF3 allows its recognition by the U5 component PRPF8 and stabilizes the U4/U5/U6 tri-snRNP spliceosomal complex. Recruited to RNA polymerase II C-terminal domain (CTD) and the pre-mRNA, it may also couple the transcriptional and spliceosomal machineries. The XAB2 complex, which contains PRPF19, is also involved in pre-mRNA splicing, transcription and transcription-coupled repair. Beside its role in pre-mRNA splicing PRPF19, as part of the PRP19-CDC5L complex, plays a role in the DNA damage response/DDR. It is recruited to the sites of DNA damage by the RPA complex where PRPF19 directly ubiquitinates RPA1 and RPA2. 'Lys-63'-linked polyubiquitination of the RPA complex allows the recruitment of the ATR-ATRIP complex and the activation of ATR, a master regulator of the DNA damage response. May also play a role in DNA double-strand break (DSB) repair by recruiting the repair factor SETMAR to altered DNA. As part of the PSO4 complex may also be involved in the DNA interstrand cross-links/ICLs repair process. In addition, may also mediate 'Lys-48'-linked polyubiquitination of substrates and play a role in proteasomal degradation. May play a role in the biogenesis of lipid droplets. May play a role in neural differentiation possibly through its function as part of the spliceosome. Forced expression leads to suppression of neuronal differentiation, and on the contrary to stimulation of astroglial cell differentiation in retinoic acid-primed P19 cells. The chain is Pre-mRNA-processing factor 19 from Mus musculus (Mouse).